Consider the following 167-residue polypeptide: NAD(P)H-quinone oxidoreductase subunit I, chloroplastic (167 aa).

2 4Fe-4S ferredoxin-type domains span residues 55–84 (GRIH…VDWK) and 95–124 (LNYS…MTEE). [4Fe-4S] cluster is bound by residues cysteine 64, cysteine 67, cysteine 70, cysteine 74, cysteine 104, cysteine 107, cysteine 110, and cysteine 114.

This sequence belongs to the complex I 23 kDa subunit family. In terms of assembly, NDH is composed of at least 16 different subunits, 5 of which are encoded in the nucleus. The cofactor is [4Fe-4S] cluster.

The protein resides in the plastid. It is found in the chloroplast thylakoid membrane. It catalyses the reaction a plastoquinone + NADH + (n+1) H(+)(in) = a plastoquinol + NAD(+) + n H(+)(out). It carries out the reaction a plastoquinone + NADPH + (n+1) H(+)(in) = a plastoquinol + NADP(+) + n H(+)(out). In terms of biological role, NDH shuttles electrons from NAD(P)H:plastoquinone, via FMN and iron-sulfur (Fe-S) centers, to quinones in the photosynthetic chain and possibly in a chloroplast respiratory chain. The immediate electron acceptor for the enzyme in this species is believed to be plastoquinone. Couples the redox reaction to proton translocation, and thus conserves the redox energy in a proton gradient. In Solanum tuberosum (Potato), this protein is NAD(P)H-quinone oxidoreductase subunit I, chloroplastic.